The sequence spans 142 residues: Large ribosomal subunit protein uL13 (142 aa).

The protein belongs to the universal ribosomal protein uL13 family. In terms of assembly, part of the 50S ribosomal subunit.

Its function is as follows. This protein is one of the early assembly proteins of the 50S ribosomal subunit, although it is not seen to bind rRNA by itself. It is important during the early stages of 50S assembly. The chain is Large ribosomal subunit protein uL13 from Pseudomonas syringae pv. syringae (strain B728a).